The chain runs to 332 residues: Casein kinase I isoform 2 (332 aa).

The 272-residue stretch at 11-282 (FRIGQKIGSG…YLKRLFRELF (272 aa)) folds into the Protein kinase domain. ATP is bound by residues 17–25 (IGSGSFGEI) and lysine 40. Aspartate 133 (proton acceptor) is an active-site residue. The disordered stretch occupies residues 306 to 332 (EGRADQQQQQQQQQQRRGSEKEDEHPV). Residues 311–320 (QQQQQQQQQQ) are compositionally biased toward low complexity. The span at 322 to 332 (RGSEKEDEHPV) shows a compositional bias: basic and acidic residues.

The protein belongs to the protein kinase superfamily. Ser/Thr protein kinase family. Mg(2+) serves as cofactor.

It carries out the reaction L-seryl-[protein] + ATP = O-phospho-L-seryl-[protein] + ADP + H(+). The catalysed reaction is L-threonyl-[protein] + ATP = O-phospho-L-threonyl-[protein] + ADP + H(+). In terms of biological role, serine/threonine protein kinase. May phosphorylate ZC3H11 during unstressed conditions, leading to proteasome-dependent degradation of ZC3H11. The sequence is that of Casein kinase I isoform 2 from Trypanosoma brucei brucei.